We begin with the raw amino-acid sequence, 333 residues long: Taste receptor type 2 member 38 (333 aa).

Topologically, residues 1-17 are extracellular; the sequence is MLTLTRICTVSYEVRST. Residues 18–38 form a helical membrane-spanning segment; it reads FLFISVLEFAVGFLTNAFIFL. Over 39-55 the chain is Cytoplasmic; that stretch reads VNFWDVVKRQPLSNSDC. The chain crosses the membrane as a helical span at residues 56 to 76; sequence VLLCLSISRLFLHGLLFLSAI. The Extracellular portion of the chain corresponds to 77-94; sequence QLTHFQKLSEPLNHSYHA. The helical transmembrane segment at 95–115 threads the bilayer; the sequence is IIMLWMIANQANLWLATCLSL. The Cytoplasmic segment spans residues 116 to 142; the sequence is LYCSKLIRSSHTFLICLASWVSRKICQ. The helical transmembrane segment at 143-163 threads the bilayer; that stretch reads MLLGIILCSCICTVLCVWCYF. At 164–190 the chain is on the extracellular side; that stretch reads SRPHFTVTTVLFTNNNTRLNWQIKDLN. N-linked (GlcNAc...) asparagine glycosylation occurs at asparagine 178. The helical transmembrane segment at 191-211 threads the bilayer; the sequence is LFYSFLFCYLWSVPPFLLFLV. Residues 212-251 lie on the Cytoplasmic side of the membrane; that stretch reads SSGMLTVSLGRHMRTMKVYTRDFRDPSLEAHIKALKSLVS. A helical transmembrane segment spans residues 252–272; it reads FFCFFVISSCAAFISVPLLIL. Topologically, residues 273–276 are extracellular; that stretch reads WRDK. A helical membrane pass occupies residues 277–297; it reads IGVMVCVGIMAACPSGHAAIL. Residues 298–333 are Cytoplasmic-facing; the sequence is ISGNAKLRRAVTTILLWAQSSLKVRADHKADSRTLC.

The protein belongs to the G-protein coupled receptor T2R family.

It is found in the membrane. Functionally, receptor that may play a role in the perception of bitterness and is gustducin-linked. May play a role in sensing the chemical composition of the gastrointestinal content. The activity of this receptor may stimulate alpha gustducin, mediate PLC-beta-2 activation and lead to the gating of TRPM5. This Hylobates klossii (Kloss's gibbon) protein is Taste receptor type 2 member 38 (TAS2R38).